Consider the following 269-residue polypeptide: Fructose permease IIC component (269 aa).

Positions 1 to 234 (MSSLQIILLL…GALGLCLALL (234 aa)) constitute a PTS EIIC type-4 domain. A run of 7 helical transmembrane segments spans residues 2 to 22 (SSLQIILLLIIAAITGIASVL), 35 to 54 (TLVGLVLGDLKTGIILGGTL), 64 to 86 (VGLAMAPDTAIASVISTILVITA), 90 to 110 (IGEGIAVAVALAAAGQALTIF), 149 to 169 (VMIPTLIVALISVSAVQAFLG), 181 to 201 (IGGGIIVVVGYAMVINMMNIP), and 206 to 226 (FFYIGFLLAAFTDFNLVGFGA).

It localises to the cell membrane. In terms of biological role, the phosphoenolpyruvate-dependent sugar phosphotransferase system (PTS), a major carbohydrate active -transport system, catalyzes the phosphorylation of incoming sugar substrates concomitant with their translocation across the cell membrane. This system is involved in fructose transport. The protein is Fructose permease IIC component (levF) of Bacillus subtilis (strain 168).